The primary structure comprises 197 residues: Inner membrane-spanning protein YciB (197 aa).

5 helical membrane passes run 36–56 (IYSATAMLIISSLVVYGALFL), 64–84 (GQWLTLIACLVFGGLTLTFHS), 90–110 (WKAPVVNWLFALGFAGSHFIG), 135–155 (LAWIAFFLFCGAANLFVAFTF), and 162–182 (FKVFGSLGMTVIFLVAQGVYL).

Belongs to the YciB family.

Its subcellular location is the cell inner membrane. Plays a role in cell envelope biogenesis, maintenance of cell envelope integrity and membrane homeostasis. The sequence is that of Inner membrane-spanning protein YciB from Pseudomonas putida (strain GB-1).